The sequence spans 185 residues: Elongation factor P (185 aa).

It belongs to the elongation factor P family.

It is found in the cytoplasm. It functions in the pathway protein biosynthesis; polypeptide chain elongation. Involved in peptide bond synthesis. Stimulates efficient translation and peptide-bond synthesis on native or reconstituted 70S ribosomes in vitro. Probably functions indirectly by altering the affinity of the ribosome for aminoacyl-tRNA, thus increasing their reactivity as acceptors for peptidyl transferase. The sequence is that of Elongation factor P from Lysinibacillus sphaericus (strain C3-41).